The sequence spans 417 residues: Gamma-glutamyl phosphate reductase (417 aa).

This sequence belongs to the gamma-glutamyl phosphate reductase family.

Its subcellular location is the cytoplasm. The enzyme catalyses L-glutamate 5-semialdehyde + phosphate + NADP(+) = L-glutamyl 5-phosphate + NADPH + H(+). The protein operates within amino-acid biosynthesis; L-proline biosynthesis; L-glutamate 5-semialdehyde from L-glutamate: step 2/2. Its function is as follows. Catalyzes the NADPH-dependent reduction of L-glutamate 5-phosphate into L-glutamate 5-semialdehyde and phosphate. The product spontaneously undergoes cyclization to form 1-pyrroline-5-carboxylate. This chain is Gamma-glutamyl phosphate reductase, found in Enterococcus faecalis (strain ATCC 700802 / V583).